A 434-amino-acid polypeptide reads, in one-letter code: Probable phosphatidylinositol 3,4,5-trisphosphate 3-phosphatase TEP1 (434 aa).

Positions 33–255 (KTKNDIGLRL…RYHEFFITHE (223 aa)) constitute a Phosphatase tensin-type domain. C193 acts as the Phosphocysteine intermediate in catalysis.

The enzyme catalyses a 1,2-diacyl-sn-glycero-3-phospho-(1D-myo-inositol-3,4,5-trisphosphate) + H2O = a 1,2-diacyl-sn-glycero-3-phospho-(1D-myo-inositol-4,5-bisphosphate) + phosphate. Its function is as follows. May act as a phosphoinositide 3-phosphatase by regulating PtdIns(3,4,5)P3 levels. The protein is Probable phosphatidylinositol 3,4,5-trisphosphate 3-phosphatase TEP1 (TEP1) of Saccharomyces cerevisiae (strain ATCC 204508 / S288c) (Baker's yeast).